Here is a 339-residue protein sequence, read N- to C-terminus: Fructose-1,6-bisphosphatase class 1 (339 aa).

4 residues coordinate Mg(2+): Glu92, Asp114, Leu116, and Asp117. Substrate contacts are provided by residues 117 to 120 (DGSS), Asn213, and Lys279. Glu285 serves as a coordination point for Mg(2+).

The protein belongs to the FBPase class 1 family. In terms of assembly, homotetramer. Requires Mg(2+) as cofactor.

The protein localises to the cytoplasm. It carries out the reaction beta-D-fructose 1,6-bisphosphate + H2O = beta-D-fructose 6-phosphate + phosphate. Its pathway is carbohydrate biosynthesis; gluconeogenesis. This chain is Fructose-1,6-bisphosphatase class 1, found in Acidovorax sp. (strain JS42).